The primary structure comprises 210 residues: MSSAKEIKKSILAPVLDNNPIALQVLGVCSALAVTTKLETAFVMTIAVMFVTALSNFFVSLIRNHIPNSVRIIVQMAIIASLVIVVDQVLKAYLYDISKQLSVFVGLIITNCIVMGRAEAFAMKSAPIPSFIDGLGNGLGYGFVLITVGFFRELLGSGKLFDMEVLPLVSNGGWYQPNGLMLLAPSAFFLIGFLIWAIRVFKPEQVEAKG.

Transmembrane regions (helical) follow at residues 11 to 31, 42 to 62, 72 to 92, 103 to 123, 131 to 151, and 178 to 198; these read ILAP…VCSA, FVMT…VSLI, IIVQ…VLKA, VFVG…AFAM, FIDG…VGFF, and NGLM…IWAI.

It belongs to the NqrDE/RnfAE family. In terms of assembly, composed of six subunits; NqrA, NqrB, NqrC, NqrD, NqrE and NqrF.

The protein localises to the cell inner membrane. It catalyses the reaction a ubiquinone + n Na(+)(in) + NADH + H(+) = a ubiquinol + n Na(+)(out) + NAD(+). NQR complex catalyzes the reduction of ubiquinone-1 to ubiquinol by two successive reactions, coupled with the transport of Na(+) ions from the cytoplasm to the periplasm. NqrA to NqrE are probably involved in the second step, the conversion of ubisemiquinone to ubiquinol. The sequence is that of Na(+)-translocating NADH-quinone reductase subunit D from Vibrio atlanticus (strain LGP32) (Vibrio splendidus (strain Mel32)).